A 292-amino-acid polypeptide reads, in one-letter code: NAD kinase (292 aa).

The active-site Proton acceptor is the Asp73. Residues 73 to 74, 147 to 148, His158, Arg175, Asp177, 188 to 193, and Gln247 each bind NAD(+); these read DG, NE, and TAYSLS.

It belongs to the NAD kinase family. A divalent metal cation serves as cofactor.

The protein resides in the cytoplasm. The catalysed reaction is NAD(+) + ATP = ADP + NADP(+) + H(+). Functionally, involved in the regulation of the intracellular balance of NAD and NADP, and is a key enzyme in the biosynthesis of NADP. Catalyzes specifically the phosphorylation on 2'-hydroxyl of the adenosine moiety of NAD to yield NADP. This chain is NAD kinase, found in Escherichia coli O157:H7.